The chain runs to 136 residues: 2-hydroxyisobutanoyl-CoA mutase small subunit (136 aa).

Residues 5–133 form the B12-binding domain; it reads PIRVLLAKVG…DSIRSLVAAR (129 aa). H18 lines the adenosylcob(III)alamin pocket.

The protein belongs to the acyl-CoA mutase small subunit family. In terms of assembly, homotetramer composed of two large substrate-binding subunits (HcmA) and two small cobalamin-binding subunits (HcmB). Adenosylcob(III)alamin serves as cofactor.

The enzyme catalyses 2-hydroxyisobutanoyl-CoA = (3S)-3-hydroxybutanoyl-CoA. In terms of biological role, together with HcmA, catalyzes the isomerization of 2-hydroxyisobutyryl-CoA and 3-hydroxybutyryl-CoA. Is specific for 2-hydroxyisobutyryl-CoA and (S)-3-hydroxybutyryl-CoA, and shows only very low activity with (R)-3-hydroxybutyryl-CoA, isobutyryl-CoA and butyryl-CoA. In vitro, can isomerize pivalyl-CoA and isovaleryl-CoA, with much lower efficiency. Plays a central role in the degradation of substrates bearing a tert-butyl moiety, such as the fuel oxygenate methyl tert-butyl ether (MTBE) and its metabolites. This chain is 2-hydroxyisobutanoyl-CoA mutase small subunit, found in Aquincola tertiaricarbonis.